The chain runs to 333 residues: Anthranilate phosphoribosyltransferase (333 aa).

5-phospho-alpha-D-ribose 1-diphosphate-binding positions include Gly-81, Gly-84–Asn-85, Thr-89, Asn-91–Thr-94, Lys-109–Ser-117, and Ala-121. Gly-81 provides a ligand contact to anthranilate. Ser-93 contacts Mg(2+). Residue Asn-112 participates in anthranilate binding. Arg-167 provides a ligand contact to anthranilate. Residues Asp-225 and Glu-226 each contribute to the Mg(2+) site.

This sequence belongs to the anthranilate phosphoribosyltransferase family. In terms of assembly, homodimer. Mg(2+) serves as cofactor.

The catalysed reaction is N-(5-phospho-beta-D-ribosyl)anthranilate + diphosphate = 5-phospho-alpha-D-ribose 1-diphosphate + anthranilate. Its pathway is amino-acid biosynthesis; L-tryptophan biosynthesis; L-tryptophan from chorismate: step 2/5. Functionally, catalyzes the transfer of the phosphoribosyl group of 5-phosphorylribose-1-pyrophosphate (PRPP) to anthranilate to yield N-(5'-phosphoribosyl)-anthranilate (PRA). This Haemophilus influenzae (strain ATCC 51907 / DSM 11121 / KW20 / Rd) protein is Anthranilate phosphoribosyltransferase.